The sequence spans 246 residues: uncharacterized protein (246 aa).

A helical membrane pass occupies residues 7-29 (GRGALASTGGCVVLAVAALMFVF).

The protein localises to the membrane. This is an uncharacterized protein from Treponema pallidum (strain Nichols).